A 246-amino-acid polypeptide reads, in one-letter code: MyoD family inhibitor (246 aa).

Disordered stretches follow at residues 1–76 and 91–151; these read MYQV…LDST and GNPL…SKST. The span at 14-26 shows a compositional bias: low complexity; sequence APYGAPSAAPGPA. Residues 99-246 form the MDFI domain; it reads LLPNDSGHPS…MECCGLCFSS (148 aa).

This sequence belongs to the MDFI family. In terms of assembly, interacts (via C-terminus) with AXIN1 and LEF1. Interacts with CCNT2. Interacts (via C-terminus) with Piezo channel composed of PIEZO1 or PIEZO2; the interaction prolongs Piezo channel inactivation.

Its subcellular location is the nucleus. It is found in the cytoplasm. Functionally, inhibits the transactivation activity of the Myod family of myogenic factors and represses myogenesis. Acts by associating with Myod family members and retaining them in the cytoplasm by masking their nuclear localization signals. Can also interfere with the DNA-binding activity of Myod family members. Plays an important role in trophoblast and chondrogenic differentiation. Regulates the transcriptional activity of TCF7L1/TCF3 by interacting directly with TCF7L1/TCF3 and preventing it from binding DNA. Binds to the axin complex, resulting in an increase in the level of free beta-catenin. Affects axin regulation of the WNT and JNK signaling pathways. Regulates the activity of mechanosensitive Piezo channel. In Homo sapiens (Human), this protein is MyoD family inhibitor (MDFI).